We begin with the raw amino-acid sequence, 382 residues long: D-galactonate dehydratase (382 aa).

Asp-183 lines the Mg(2+) pocket. The active-site Proton donor is the His-185. Positions 209 and 235 each coordinate Mg(2+). His-285 acts as the Proton acceptor in catalysis.

Belongs to the mandelate racemase/muconate lactonizing enzyme family. GalD subfamily. Mg(2+) is required as a cofactor.

The catalysed reaction is D-galactonate = 2-dehydro-3-deoxy-D-galactonate + H2O. The protein operates within carbohydrate acid metabolism; D-galactonate degradation; D-glyceraldehyde 3-phosphate and pyruvate from D-galactonate: step 1/3. Its function is as follows. Catalyzes the dehydration of D-galactonate to 2-keto-3-deoxy-D-galactonate. This chain is D-galactonate dehydratase, found in Salmonella gallinarum (strain 287/91 / NCTC 13346).